The following is a 944-amino-acid chain: Isoleucine--tRNA ligase (944 aa).

A 'HIGH' region motif is present at residues 58 to 68; the sequence is PYANGSIHIGH. Glutamate 563 is a binding site for L-isoleucyl-5'-AMP. The short motif at 604–608 is the 'KMSKS' region element; it reads KMSKS. ATP is bound at residue lysine 607. Cysteine 907, cysteine 910, cysteine 927, and cysteine 930 together coordinate Zn(2+).

This sequence belongs to the class-I aminoacyl-tRNA synthetase family. IleS type 1 subfamily. Monomer. Requires Zn(2+) as cofactor.

It is found in the cytoplasm. It catalyses the reaction tRNA(Ile) + L-isoleucine + ATP = L-isoleucyl-tRNA(Ile) + AMP + diphosphate. Functionally, catalyzes the attachment of isoleucine to tRNA(Ile). As IleRS can inadvertently accommodate and process structurally similar amino acids such as valine, to avoid such errors it has two additional distinct tRNA(Ile)-dependent editing activities. One activity is designated as 'pretransfer' editing and involves the hydrolysis of activated Val-AMP. The other activity is designated 'posttransfer' editing and involves deacylation of mischarged Val-tRNA(Ile). This chain is Isoleucine--tRNA ligase, found in Salmonella choleraesuis (strain SC-B67).